We begin with the raw amino-acid sequence, 951 residues long: Coiled-coil and C2 domain-containing protein 1A (951 aa).

4 disordered regions span residues 80 to 139 (CMRD…LETT), 185 to 266 (AIDE…RQRD), 306 to 346 (VDLS…PPPR), and 437 to 491 (NQDE…TRAQ). The span at 84 to 104 (PDEDEEEGTDEDDLEADDDLL) shows a compositional bias: acidic residues. Residues Thr92, Thr204, and Thr206 each carry the phosphothreonine modification. The span at 201–210 (PASTPTYSPA) shows a compositional bias: low complexity. The residue at position 208 (Ser208) is a Phosphoserine; by CDK1. Residues Ser253 and Ser324 each carry the phosphoserine modification. Residues 311-333 (LPPPPDQLPPDPPSPPSQPPTPA) show a composition bias toward pro residues. Positions 346 to 392 (RTLLEALEQRMERYQVAAAQAKSKGDQRKARMHERIVKQYQDAIRAH) form a coiled coil. Ser455 is modified (phosphoserine). Over residues 475 to 488 (SAPTAKAPPKATST) the composition is skewed to low complexity. Residues 484-517 (KATSTRAQQQLAFLEGRKKQLLQAALRAKQKNDV) are a coiled coil. One can recognise a C2 domain in the interval 637–771 (RFEQRTFSVI…EIACEVREIL (135 aa)). The disordered stretch occupies residues 818–841 (TQVAGPKGKAPPVPAPARESGNRS).

The protein belongs to the CC2D1 family. Phosphorylation on Ser-208 by CDK1 promotes spindle pole localization and association with SCC1/RAD21.

The protein localises to the cytoplasm. It localises to the nucleus. Its subcellular location is the cytoskeleton. The protein resides in the microtubule organizing center. It is found in the centrosome. Its function is as follows. Transcription factor that binds specifically to the DRE (dual repressor element) and represses HTR1A gene transcription in neuronal cells. The combination of calcium and ATP specifically inactivates the binding with FRE. May play a role in the altered regulation of HTR1A associated with anxiety and major depression. Mediates HDAC-independent repression of HTR1A promoter in neuronal cell. Performs essential function in controlling functional maturation of synapses. Plays distinct roles depending on its localization. When cytoplasmic, acts as a scaffold protein in the PI3K/PDK1/AKT pathway. Repressor of HTR1A when nuclear. In the centrosome, regulates spindle pole localization of the cohesin subunit SCC1/RAD21, thereby mediating centriole cohesion during mitosis. In Homo sapiens (Human), this protein is Coiled-coil and C2 domain-containing protein 1A (CC2D1A).